Consider the following 967-residue polypeptide: Cytosolic carboxypeptidase 2 (967 aa).

One can recognise a Peptidase M14 domain in the interval 330-601; the sequence is YPYTYSDLQR…HFCDTLLDYC (272 aa). The Zn(2+) site is built by histidine 396, glutamate 399, and histidine 492. Glutamate 565 serves as the catalytic Proton donor/acceptor. 2 disordered regions span residues 679–706 and 944–967; these read KRRLRSRKERNSLYQKRNARQKQKLHEA and PGISSSEPHFPNSSEDITVRNTMK. Over residues 946-967 the composition is skewed to polar residues; sequence ISSSEPHFPNSSEDITVRNTMK.

Belongs to the peptidase M14 family. It depends on Zn(2+) as a cofactor.

It is found in the cytoplasm. Its subcellular location is the cytosol. The protein resides in the cytoskeleton. It localises to the microtubule organizing center. The protein localises to the centrosome. It is found in the centriole. Its subcellular location is the cilium basal body. The enzyme catalyses (L-glutamyl)(n+1)-gamma-L-glutamyl-L-glutamyl-[protein] + H2O = (L-glutamyl)(n)-gamma-L-glutamyl-L-glutamyl-[protein] + L-glutamate. Functionally, metallocarboxypeptidase that mediates deglutamylation of target proteins. Catalyzes the deglutamylation of polyglutamate side chains generated by post-translational polyglutamylation in proteins such as tubulins. Also removes gene-encoded polyglutamates from the carboxy-terminus of target proteins such as MYLK. Does not show detyrosinase or deglycylase activities from the carboxy-terminus of tubulin. In terms of biological role, metallocarboxypeptidase that mediates deglutamylation of tubulin and non-tubulin target proteins. Catalyzes the removal of polyglutamate side chains present on the gamma-carboxyl group of glutamate residues within the C-terminal tail of tubulin protein. Specifically cleaves tubulin long-side-chains, while it is not able to remove the branching point glutamate. Also catalyzes the removal of polyglutamate residues from the carboxy-terminus of non-tubulin proteins. This chain is Cytosolic carboxypeptidase 2 (agbl2), found in Xenopus tropicalis (Western clawed frog).